The primary structure comprises 131 residues: Small ribosomal subunit protein uS8 (131 aa).

This sequence belongs to the universal ribosomal protein uS8 family. Part of the 30S ribosomal subunit. Contacts proteins S5 and S12.

Its function is as follows. One of the primary rRNA binding proteins, it binds directly to 16S rRNA central domain where it helps coordinate assembly of the platform of the 30S subunit. The chain is Small ribosomal subunit protein uS8 from Bacteroides thetaiotaomicron (strain ATCC 29148 / DSM 2079 / JCM 5827 / CCUG 10774 / NCTC 10582 / VPI-5482 / E50).